The chain runs to 423 residues: Phosphoribosylamine--glycine ligase (423 aa).

The 208-residue stretch at 107–314 (KAFMAKYNIP…LSDLVEAAID (208 aa)) folds into the ATP-grasp domain. ATP is bound at residue 133–194 (VNQKGAPIVI…EDFLQGEEAS (62 aa)). E284 and N286 together coordinate Mg(2+).

It belongs to the GARS family. Requires Mg(2+) as cofactor. It depends on Mn(2+) as a cofactor.

The catalysed reaction is 5-phospho-beta-D-ribosylamine + glycine + ATP = N(1)-(5-phospho-beta-D-ribosyl)glycinamide + ADP + phosphate + H(+). Its pathway is purine metabolism; IMP biosynthesis via de novo pathway; N(1)-(5-phospho-D-ribosyl)glycinamide from 5-phospho-alpha-D-ribose 1-diphosphate: step 2/2. The protein is Phosphoribosylamine--glycine ligase of Neisseria meningitidis serogroup A / serotype 4A (strain DSM 15465 / Z2491).